Here is a 1071-residue protein sequence, read N- to C-terminus: MTSPAKFKKDKEIIAEYDTQVKEIRAQLTEQMKCLDQQCELRVQLLQDLQDFFRKKAEIEMDYSRNLEKLAERFLAKTRSTKDQQFKKDQNVLSPVNCWNLLLNQVKRESRDHTTLSDIYLNNIIPRFVQVSEDSGRLFKKSKEVGQQLQDDLMKVLNELYSVMKTYHMYNADSISAQSKLKEAEKQEEKQIGKSVKQEDRQTPRSPDSTANVRIEEKHVRRSSVKKIEKMKEKRQAKYTENKLKAIKARNEYLLALEATNASVFKYYIHDLSDLIDQCCDLGYHASLNRALRTFLSAELNLEQSKHEGLDAIENAVENLDATSDKQRLMEMYNNVFCPPMKFEFQPHMGDMASQLCAQQPVQSELVQRCQQLQSRLSTLKIENEEVKKTMEATLQTIQDIVTVEDFDVSDCFQYSNSMESVKSTVSETFMSKPSIAKRRANQQETEQFYFTKMKEYLEGRNLITKLQAKHDLLQKTLGESQRTDCSLARRSSTVRKQDSSQAIPLVVESCIRFISRHGLQHEGIFRVSGSQVEVNDIKNAFERGEDPLAGDQNDHDMDSIAGVLKLYFRGLEHPLFPKDIFHDLMACVTMDNLQERALHIRKVLLVLPKTTLIIMRYLFAFLNHLSQFSEENMMDPYNLAICFGPSLMSVPEGHDQVSCQAHVNELIKTIIIQHENIFPSPRELEGPVYSRGGSMEDYCDSPHGETTSVEDSTQDVTAEHHTSDDECEPIEAIAKFDYVGRTARELSFKKGASLLLYQRASDDWWEGRHNGIDGLIPHQYIVVQDTEDGVVERSSPKSEIEVISEPPEEKVTARAGASCPSGGHVADIYLANINKQRKRPESGSIRKTFRSDSHGLSSSLTDSSSPGVGASCRPSSQPIMSQSLPKEGPDKCSISGHGSLNSISRHSSLKNRLDSPQIRKTATAGRSKSFNNHRPMDPEVIAQDIEATMNSALNELRELERQSSVKHTPDVVLDTLEPLKTSPVVAPTSEPSSPLHTQLLKDPEPAFQRSASTAGDIACAFRPVKSVKMAAPVKPPATRPKPTVFPKTNATSPGVNSSTSPQSTDKSCTV.

The F-BAR domain occupies 22 to 325 (KEIRAQLTEQ…AVENLDATSD (304 aa)). Over residues 181–203 (LKEAEKQEEKQIGKSVKQEDRQT) the composition is skewed to basic and acidic residues. The tract at residues 181–211 (LKEAEKQEEKQIGKSVKQEDRQTPRSPDSTA) is disordered. Phosphoserine is present on Ser206. Residues 362-401 (VQSELVQRCQQLQSRLSTLKIENEEVKKTMEATLQTIQDI) adopt a coiled-coil conformation. Residues Ser427, Ser500, Ser691, and Ser695 each carry the phosphoserine modification. One can recognise a Rho-GAP domain in the interval 489–679 (ARRSSTVRKQ…TIIIQHENIF (191 aa)). A disordered region spans residues 698–726 (DYCDSPHGETTSVEDSTQDVTAEHHTSDD). The span at 705 to 717 (GETTSVEDSTQDV) shows a compositional bias: polar residues. Ser724 is subject to Phosphoserine. One can recognise an SH3 domain in the interval 728 to 787 (CEPIEAIAKFDYVGRTARELSFKKGASLLLYQRASDDWWEGRHNGIDGLIPHQYIVVQDT). Ser795 carries the phosphoserine modification. The segment at 837 to 936 (QRKRPESGSI…RSKSFNNHRP (100 aa)) is disordered. The span at 855–866 (HGLSSSLTDSSS) shows a compositional bias: low complexity. 2 stretches are compositionally biased toward polar residues: residues 874-885 (RPSSQPIMSQSL) and 897-907 (GHGSLNSISRH). At Ser916 the chain carries Phosphoserine. Polar residues predominate over residues 919-933 (IRKTATAGRSKSFNN). Arg927 is subject to Symmetric dimethylarginine; by PRMT5. Ser930 bears the Phosphoserine mark. A coiled-coil region spans residues 940-967 (EVIAQDIEATMNSALNELRELERQSSVK). The interval 983–1012 (SPVVAPTSEPSSPLHTQLLKDPEPAFQRSA) is disordered. Residues Ser990, Ser994, Ser1013, and Ser1027 each carry the phosphoserine modification. The segment at 1029–1071 (KMAAPVKPPATRPKPTVFPKTNATSPGVNSSTSPQSTDKSCTV) is disordered. Over residues 1047–1071 (PKTNATSPGVNSSTSPQSTDKSCTV) the composition is skewed to polar residues.

In terms of assembly, homodimer. Heterodimer; forms a heterodimer with SRGAP2C, altering SRGAP2 function. Forms a heterooligomer with SRGAP1 and SRGAP3 through its F-BAR domain. Interacts (via SH3 domain) with GPHN. Interacts (via SH3 domain) with FMNL1 (activated by RAC1); regulates the actin filament severing activity of FMNL1 and actin dynamics. Interacts (via SH3 domain) with FMNL3. Interacts with RAC1; specifically stimulates RAC1 GTPase activity. Interacts (via F-BAR domain) with HOMER1. Interacts with ROBO1 and ROBO2. Interacts with FASLG. Interacts with PRMT5. Post-translationally, methylation at Arg-927 is required for the stimulation of cell migration, dimerization and localization at the plasma membrane protrusions.

The protein resides in the cell membrane. It localises to the cell projection. Its subcellular location is the dendritic spine. The protein localises to the postsynaptic density. It is found in the postsynaptic cell membrane. The protein resides in the lamellipodium. It localises to the cytoplasmic vesicle. Its subcellular location is the phagosome. The protein localises to the nucleus. It is found in the cytoplasm. The protein resides in the cytosol. Activity is strongly inhibited by SRGAP2C, which heterodimerize with SRGAP2/SRGAP2A, thereby reducing SRGAP2/SRGAP2A levels through proteasome-dependent degradation. In terms of biological role, postsynaptic RAC1 GTPase activating protein (GAP) that plays a key role in neuronal morphogenesis and migration mainly during development of the cerebral cortex. Regulates excitatory and inhibitory synapse maturation and density in cortical pyramidal neurons. SRGAP2/SRGAP2A limits excitatory and inhibitory synapse density through its RAC1-specific GTPase activating activity, while it promotes maturation of both excitatory and inhibitory synapses through its ability to bind to the postsynaptic scaffolding protein HOMER1 at excitatory synapses, and the postsynaptic protein GPHN at inhibitory synapses. Mechanistically, acts by binding and deforming membranes, thereby regulating actin dynamics to regulate cell migration and differentiation. Promotes cell repulsion and contact inhibition of locomotion: localizes to protrusions with curved edges and controls the duration of RAC1 activity in contact protrusions. In non-neuronal cells, may also play a role in cell migration by regulating the formation of lamellipodia and filopodia. This is SLIT-ROBO Rho GTPase-activating protein 2 from Homo sapiens (Human).